A 181-amino-acid chain; its full sequence is Der GTPase-activating protein YihI (181 aa).

Positions 1 to 73 (MSRIKKARKP…DPRIGSKKPI (73 aa)) are disordered. Basic and acidic residues predominate over residues 22 to 32 (NRTDRDVESRE). A compositionally biased stretch (basic residues) spans 33–42 (IKRKRKRKGL). A compositionally biased stretch (basic and acidic residues) spans 55–67 (QARRNAQKKDPRI).

It belongs to the YihI family. As to quaternary structure, interacts with Der.

Functionally, a GTPase-activating protein (GAP) that modifies Der/EngA GTPase function. May play a role in ribosome biogenesis. This is Der GTPase-activating protein YihI from Aliivibrio fischeri (strain ATCC 700601 / ES114) (Vibrio fischeri).